Consider the following 89-residue polypeptide: Large ribosomal subunit protein bL27 (89 aa).

Positions 1 to 26 are disordered; it reads MAQKKAGGSSRNGRDSVGQRRGVKRF.

The protein belongs to the bacterial ribosomal protein bL27 family.

This chain is Large ribosomal subunit protein bL27, found in Desulfovibrio desulfuricans (strain ATCC 27774 / DSM 6949 / MB).